The chain runs to 177 residues: Adenine phosphoribosyltransferase (177 aa).

The protein belongs to the purine/pyrimidine phosphoribosyltransferase family. As to quaternary structure, homodimer.

Its subcellular location is the cytoplasm. It catalyses the reaction AMP + diphosphate = 5-phospho-alpha-D-ribose 1-diphosphate + adenine. The protein operates within purine metabolism; AMP biosynthesis via salvage pathway; AMP from adenine: step 1/1. Catalyzes a salvage reaction resulting in the formation of AMP, that is energically less costly than de novo synthesis. The polypeptide is Adenine phosphoribosyltransferase (Cutibacterium acnes (strain DSM 16379 / KPA171202) (Propionibacterium acnes)).